A 57-amino-acid polypeptide reads, in one-letter code: UPF0391 membrane protein Xaut_1725 (57 aa).

The next 2 membrane-spanning stretches (helical) occupy residues 4-24 (WAVT…GGIA) and 30-50 (IAKI…VAGL).

It belongs to the UPF0391 family.

It localises to the cell membrane. This Xanthobacter autotrophicus (strain ATCC BAA-1158 / Py2) protein is UPF0391 membrane protein Xaut_1725.